A 141-amino-acid chain; its full sequence is Large ribosomal subunit protein uL11 (141 aa).

It belongs to the universal ribosomal protein uL11 family. As to quaternary structure, part of the ribosomal stalk of the 50S ribosomal subunit. Interacts with L10 and the large rRNA to form the base of the stalk. L10 forms an elongated spine to which L12 dimers bind in a sequential fashion forming a multimeric L10(L12)X complex. In terms of processing, one or more lysine residues are methylated.

Functionally, forms part of the ribosomal stalk which helps the ribosome interact with GTP-bound translation factors. The polypeptide is Large ribosomal subunit protein uL11 (Trichodesmium erythraeum (strain IMS101)).